Consider the following 313-residue polypeptide: Ribosomal RNA small subunit methyltransferase H (313 aa).

S-adenosyl-L-methionine is bound by residues 35–37 (GGH), aspartate 55, phenylalanine 79, aspartate 100, and glutamine 107.

The protein belongs to the methyltransferase superfamily. RsmH family.

The protein resides in the cytoplasm. The enzyme catalyses cytidine(1402) in 16S rRNA + S-adenosyl-L-methionine = N(4)-methylcytidine(1402) in 16S rRNA + S-adenosyl-L-homocysteine + H(+). Its function is as follows. Specifically methylates the N4 position of cytidine in position 1402 (C1402) of 16S rRNA. The chain is Ribosomal RNA small subunit methyltransferase H from Burkholderia pseudomallei (strain 1106a).